A 130-amino-acid polypeptide reads, in one-letter code: Small ribosomal subunit protein uS9 (130 aa).

Positions threonine 105–arginine 130 are disordered. Basic residues predominate over residues lysine 111–arginine 130.

This sequence belongs to the universal ribosomal protein uS9 family.

The chain is Small ribosomal subunit protein uS9 from Lysinibacillus sphaericus (strain C3-41).